Here is a 396-residue protein sequence, read N- to C-terminus: Actin-related protein 6 (396 aa).

This sequence belongs to the actin family. ARP6 subfamily. In terms of assembly, interacts with CBX1 and CBX3.

It is found in the cytoplasm. The protein localises to the cytoskeleton. The protein resides in the nucleus. Its subcellular location is the nucleolus. In terms of biological role, required for formation and/or maintenance of the proper nucleolar structure and function. Plays a dual role in the regulation of ribosomal DNA (rDNA) transcription. In the presence of high glucose, it maintains active rDNA transcription through H2A.Z deposition and under glucose starvation, is required for the repression of rDNA transcription, and this function may be independent of H2A.Z. In Gallus gallus (Chicken), this protein is Actin-related protein 6 (ACTR6).